Here is a 444-residue protein sequence, read N- to C-terminus: MDSATNLLEQQGSAADVSGGSHPAEVEVTTQARATFGMDAEGHATGEAVTTTTATLRREGSDEDIFEQVQMILRKRRGWGPEDSLSPNDLDILEYDDELVEEDDAGCPLPSTPEDTQLIEAEMTEVLKAGVLSDEIDLGALAHNAAEQAEEFVRKVWEASWKVCHYKNLPKWLQDNDFLHRGHRPPLPSFRACFKSIFRVHTETGNIWTHLLGCIAFIGVALYFISRPSVEIQTQEKIVFGAFFIGAIVCLGFSFAFHTLSCHSVEMGRLFSKLDYCGIALLIMGSFVPWLYYGFYCHYQPKVIYLSVVSILGILSIVVSLWDKFSEPALRPLRAGVFMSFGLSGVIPAIHYSIMEGWFSQMSRASLGWLILMGLLYILGALLYALRVPERWFPGKFDIWGQSHQIFHILVIAAAFVHYHGISEMAMYRVMYSECTVPIEPITF.

Residues 1 to 13 (MDSATNLLEQQGS) show a composition bias toward polar residues. A disordered region spans residues 1–24 (MDSATNLLEQQGSAADVSGGSHPA). The Cytoplasmic segment spans residues 1–204 (MDSATNLLEQ…KSIFRVHTET (204 aa)). Residues 205–225 (GNIWTHLLGCIAFIGVALYFI) form a helical membrane-spanning segment. At 226–237 (SRPSVEIQTQEK) the chain is on the extracellular side. A helical membrane pass occupies residues 238 to 258 (IVFGAFFIGAIVCLGFSFAFH). His-258 contributes to the Zn(2+) binding site. The Cytoplasmic segment spans residues 259–276 (TLSCHSVEMGRLFSKLDY). The helical transmembrane segment at 277-297 (CGIALLIMGSFVPWLYYGFYC) threads the bilayer. Residues 298–302 (HYQPK) lie on the Extracellular side of the membrane. Residues 303–323 (VIYLSVVSILGILSIVVSLWD) traverse the membrane as a helical segment. Over 324–334 (KFSEPALRPLR) the chain is Cytoplasmic. Residues 335–355 (AGVFMSFGLSGVIPAIHYSIM) form a helical membrane-spanning segment. The Extracellular portion of the chain corresponds to 356-365 (EGWFSQMSRA). Residues 366 to 386 (SLGWLILMGLLYILGALLYAL) traverse the membrane as a helical segment. Residues 387 to 405 (RVPERWFPGKFDIWGQSHQ) are Cytoplasmic-facing. Zn(2+) contacts are provided by His-404 and His-408. Residues 406 to 426 (IFHILVIAAAFVHYHGISEMA) traverse the membrane as a helical segment. Residues 427 to 444 (MYRVMYSECTVPIEPITF) are Extracellular-facing.

This sequence belongs to the ADIPOR family. In larval and adult brain, expressed in insulin-producing cells and in neurons of the subesophageal region. Also expressed in lateral neurons of the adult brain (at protein level). In third instar larvae, expressed in central nervous system (CNS), imaginal disk, salivary gland, fat body, gut and malphigian tubules.

The protein localises to the cell membrane. Its function is as follows. Adiponectin receptor. In insulin-producing cells, regulates insulin secretion and controls glucose and lipid metabolism. The polypeptide is Adiponectin receptor protein (AdipoR) (Drosophila melanogaster (Fruit fly)).